We begin with the raw amino-acid sequence, 155 residues long: Ribonuclease 2B (155 aa).

Positions 1–25 (MGLKLLESRLCLLLLLGLVLTLVSC) are cleaved as a signal peptide. Catalysis depends on H38, which acts as the Proton acceptor. Intrachain disulfides connect C47/C106, C61/C118, C79/C133, and C86/C94. 62–66 (KDLNT) is a substrate binding site. Residue N114 is glycosylated (N-linked (GlcNAc...) asparagine). The active-site Proton donor is H150.

This sequence belongs to the pancreatic ribonuclease family.

The enzyme catalyses an [RNA] containing cytidine + H2O = an [RNA]-3'-cytidine-3'-phosphate + a 5'-hydroxy-ribonucleotide-3'-[RNA].. It catalyses the reaction an [RNA] containing uridine + H2O = an [RNA]-3'-uridine-3'-phosphate + a 5'-hydroxy-ribonucleotide-3'-[RNA].. Its function is as follows. This is a non-secretory ribonuclease. It is a pyrimidine specific nuclease with a slight preference for U. Cytotoxin and helminthotoxin. Possesses a wide variety of biological activities. This chain is Ribonuclease 2B, found in Mus musculus (Mouse).